The primary structure comprises 49 residues: Large ribosomal subunit protein bL33 (49 aa).

The tract at residues 18–49 is disordered; the sequence is ITTKNKRNNPERLELKKYSPRLKRTTLHRETK. Basic and acidic residues predominate over residues 25 to 34; the sequence is NNPERLELKK.

The protein belongs to the bacterial ribosomal protein bL33 family.

This is Large ribosomal subunit protein bL33 from Lysinibacillus sphaericus (strain C3-41).